A 2021-amino-acid chain; its full sequence is Outer membrane protein A (2021 aa).

The N-terminal stretch at 1–38 (MANISPKLFQKAIQQGLKAALFTTSTAAIMLSSSGALG) is a signal peptide. One can recognise an Autotransporter domain in the interval 1734 to 2021 (DMDAKFGAWI…QGSVKVRVNF (288 aa)).

This sequence belongs to the rickettsiae OmpA/OmpB family. In terms of processing, glycosylated.

The protein localises to the periplasm. Its subcellular location is the secreted. It is found in the cell surface. The protein resides in the cell outer membrane. In terms of biological role, elicits protective immunity. The chain is Outer membrane protein A (ompA) from Rickettsia conorii (strain ATCC VR-613 / Malish 7).